The primary structure comprises 138 residues: Proofreading thioesterase EntH (138 aa).

The active-site Nucleophile or proton acceptor is Glu64.

This sequence belongs to the thioesterase PaaI family. Homotetramer. Dimer of dimers. Interacts specifically with the aryl carrier protein (ArCP) domain of EntB.

The protein localises to the cytoplasm. Its pathway is siderophore biosynthesis; enterobactin biosynthesis. Functionally, required for optimal enterobactin synthesis. Acts as a proofreading enzyme that prevents EntB misacylation by hydrolyzing the thioester bound existing between EntB and wrongly charged molecules. The polypeptide is Proofreading thioesterase EntH (Salmonella arizonae (strain ATCC BAA-731 / CDC346-86 / RSK2980)).